The primary structure comprises 513 residues: HTH-type transcriptional regulatory protein TyrR (513 aa).

The region spanning 2–72 is the ACT domain; it reads RLEVFCEDRL…GVTDVRTVPW (71 aa). The PAS domain maps to 78–114; that stretch reads EHLALSALLEALPEPVLSVDMKSKVDMANPASCQLFG. Residues 206 to 428 enclose the Sigma-54 factor interaction domain; sequence IVAVSPKMKH…LKNAIYRALT (223 aa). ATP contacts are provided by residues 234–241 and 290–299; these read GDTGTGKD and ANGGSVLLDE. Positions 482-502 form a DNA-binding region, H-T-H motif; that stretch reads STRKLAKRLGVSHTAIANKLR.

As to quaternary structure, homodimer. In presence of tyrosine (or high concentrations of phenylalanine or tryptophan) and ATP, it self-associates to form an hexamer. At low tyrosine concentrations, homodimers can bind to certain recognition sequences referred to as 'strong TyrR boxes'. Homohexamers are the active repressing species, interacting with two or three tyrR boxes in the targeted regulatory DNA, including 'strong TyrR boxes' and lower-affinity sites called 'weak TyrR boxes'.

The protein resides in the cytoplasm. Binding of ATP strongly enhances the affinity of TyrR for tyrosine. Dual transcriptional regulator of the TyrR regulon, which includes a number of genes coding for proteins involved in the biosynthesis or transport of the three aromatic amino acids, phenylalanine, tyrosine and tryptophan. These three aromatic amino acids act as effectors which bind to the TyrR protein to form an active regulatory protein. Modulates the expression of at least eight unlinked transcription units, including aroF, aroG, aroLM, aroP, mtr, tyrA, tyrB and tyrP. In most cases TyrR acts as a repressor, but positive effects have been observed on the tyrP gene, which is repressed in the presence of tyrosine and activated at high phenylalanine concentrations. Is also involved in activation, but not repression, of mtr expression in association with phenylalanine or tyrosine. Acts by binding specifically to TyrR boxes in the promoter region of the target genes. The sequence is that of HTH-type transcriptional regulatory protein TyrR from Escherichia coli (strain K12).